A 275-amino-acid polypeptide reads, in one-letter code: Thiazole synthase (275 aa).

K108 acts as the Schiff-base intermediate with DXP in catalysis. 1-deoxy-D-xylulose 5-phosphate contacts are provided by residues G169, 196–197 (AG), and 218–219 (NT).

This sequence belongs to the ThiG family. As to quaternary structure, homotetramer. Forms heterodimers with either ThiH or ThiS.

Its subcellular location is the cytoplasm. It carries out the reaction [ThiS sulfur-carrier protein]-C-terminal-Gly-aminoethanethioate + 2-iminoacetate + 1-deoxy-D-xylulose 5-phosphate = [ThiS sulfur-carrier protein]-C-terminal Gly-Gly + 2-[(2R,5Z)-2-carboxy-4-methylthiazol-5(2H)-ylidene]ethyl phosphate + 2 H2O + H(+). Its pathway is cofactor biosynthesis; thiamine diphosphate biosynthesis. Catalyzes the rearrangement of 1-deoxy-D-xylulose 5-phosphate (DXP) to produce the thiazole phosphate moiety of thiamine. Sulfur is provided by the thiocarboxylate moiety of the carrier protein ThiS. In vitro, sulfur can be provided by H(2)S. The sequence is that of Thiazole synthase from Ralstonia nicotianae (strain ATCC BAA-1114 / GMI1000) (Ralstonia solanacearum).